A 109-amino-acid chain; its full sequence is uncharacterized protein (109 aa).

The protein localises to the mitochondrion. This is an uncharacterized protein from Saccharomyces cerevisiae (strain ATCC 204508 / S288c) (Baker's yeast).